Here is a 433-residue protein sequence, read N- to C-terminus: Legumain (433 aa).

The first 17 residues, 1–17 (MIWEFTVLLSLVLGTGA), serve as a signal peptide directing secretion. Residues 18 to 25 (VPLEDPED) constitute a propeptide that is removed on maturation. An N-linked (GlcNAc...) asparagine glycan is attached at Asn91. His148 is an active-site residue. N-linked (GlcNAc...) asparagine glycosylation is present at Asn167. Cys189 functions as the Nucleophile in the catalytic mechanism. Asn263 and Asn272 each carry an N-linked (GlcNAc...) asparagine glycan. Positions 324–433 (DLQESRRLVQ…SMNKVCHGYY (110 aa)) are excised as a propeptide. 2 disulfides stabilise this stretch: Cys378–Cys412 and Cys390–Cys429.

Belongs to the peptidase C13 family. In terms of assembly, homodimer before autocatalytic removal of the propeptide. Monomer after autocatalytic processing. May interact with integrins. Post-translationally, activated by autocatalytic processing at pH 4. In terms of tissue distribution, detected in kidney (at protein level).

It is found in the lysosome. The catalysed reaction is Hydrolysis of proteins and small molecule substrates at -Asn-|-Xaa- bonds.. Its function is as follows. Has a strict specificity for hydrolysis of asparaginyl bonds. Can also cleave aspartyl bonds slowly, especially under acidic conditions. Involved in the processing of proteins for MHC class II antigen presentation in the lysosomal/endosomal system. Also involved in MHC class I antigen presentation in cross-presenting dendritic cells by mediating cleavage and maturation of Perforin-2 (MPEG1), thereby promoting antigen translocation in the cytosol. Required for normal lysosomal protein degradation in renal proximal tubules. Required for normal degradation of internalized EGFR. Plays a role in the regulation of cell proliferation via its role in EGFR degradation. This Bos taurus (Bovine) protein is Legumain (LGMN).